A 274-amino-acid polypeptide reads, in one-letter code: Protein CURLY FLAG LEAF 1 (274 aa).

The tract at residues 17–44 is disordered; it reads SLNGGGGGGGGRRRGRRAAAAEGSDDSE. Residues 47-52 carry the EAR motif; the sequence is TVELNS. Residues 54-88 form the WW domain; that stretch reads VALPYHWEQCLDIRTGQVYYINWEDGTRTTIDPRS. Disordered regions lie at residues 83–133 and 175–216; these read TIDP…SGYT and GRDG…SPTD. Composition is skewed to low complexity over residues 87–106, 121–133, and 184–207; these read RSSSAYSPSPASRSASSSSR, AAAASTTTSSGYT, and SSSSSSSSSSSSSASSSRGSAVSS.

Binds to HDG1.

Functionally, negatively regulates the cuticle development probably by interacting with the HD-ZIP IV transcription factor HDG1. The chain is Protein CURLY FLAG LEAF 1 from Oryza sativa subsp. japonica (Rice).